Here is a 504-residue protein sequence, read N- to C-terminus: Ammonium transporter 1 member 4 (504 aa).

12 consecutive transmembrane segments (helical) span residues 12–32 (LIPL…AEYI), 55–75 (LLFS…LCAG), 90–110 (VIDA…FAFG), 136–156 (YFLY…GSIA), 161–181 (FVAY…IVSH), 207–227 (FAGS…GALI), 251–271 (LVVL…PGSF), 292–314 (AVGR…TLFG), 318–338 (IDGY…FAAI), 344–364 (VVEP…LMGC), 377–397 (LEAA…TGLF), and 430–450 (VVQI…LFFI). Residue Thr471 is modified to Phosphothreonine.

Belongs to the ammonia transporter channel (TC 1.A.11.2) family. As to expression, specifically expressed in pollen grains and tubes.

It is found in the cell membrane. In terms of biological role, high affinity ammonium transporter in the plasma membrane. In Arabidopsis thaliana (Mouse-ear cress), this protein is Ammonium transporter 1 member 4 (AMT1-4).